Reading from the N-terminus, the 119-residue chain is Large ribosomal subunit protein bL20 (119 aa).

It belongs to the bacterial ribosomal protein bL20 family.

In terms of biological role, binds directly to 23S ribosomal RNA and is necessary for the in vitro assembly process of the 50S ribosomal subunit. It is not involved in the protein synthesizing functions of that subunit. The protein is Large ribosomal subunit protein bL20 of Azorhizobium caulinodans (strain ATCC 43989 / DSM 5975 / JCM 20966 / LMG 6465 / NBRC 14845 / NCIMB 13405 / ORS 571).